The chain runs to 372 residues: Stress-activated protein kinase JNK (372 aa).

In terms of domain architecture, Protein kinase spans 24–320; the sequence is YINLRPIGSG…VDEALKHEYI (297 aa). Residues 31–36 and lysine 53 each bind ATP; that span reads GSGAQG. The Proton acceptor role is filled by aspartate 149. Phosphothreonine is present on threonine 181. The short motif at 181 to 183 is the TXY element; that stretch reads TPY. Tyrosine 183 bears the Phosphotyrosine mark.

This sequence belongs to the protein kinase superfamily. CMGC Ser/Thr protein kinase family. MAP kinase subfamily. Interacts with MKP-4 (via tyrosine-protein phosphatase domain); the interaction dephosphorylates bsk. Mg(2+) is required as a cofactor. In terms of processing, dually phosphorylated on Thr-181 and Tyr-183, which activates the enzyme. During gastrulation, expression is seen in cells undergoing morphogenetic movements. By stage 9 of embryonic development, expression is ubiquitous. At stages 12-14, expression occurs in epidermis and central nervous system. At stage 15, expression is restricted to ventral nerve cord, brain and some peripheral neurons. In larvae, expression is seen in all imaginal disks, with highest levels in wing and eye disks, and in the CNS. Adults express the protein in fat body and hemocytes.

It is found in the nucleus. Its subcellular location is the cytoplasm. It carries out the reaction L-seryl-[protein] + ATP = O-phospho-L-seryl-[protein] + ADP + H(+). The catalysed reaction is L-threonyl-[protein] + ATP = O-phospho-L-threonyl-[protein] + ADP + H(+). Its activity is regulated as follows. Activated by threonine and tyrosine phosphorylation by the dual specificity kinase, hep. Inhibited by dual specificity phosphatase, puckered. Its function is as follows. Mitogen-activated protein kinase and key component of the c-Jun N-terminal kinase (JNK) pathway which phosphorylate and activate transcription factors involved in a wide range of biological processes including response to various stresses, cellular proliferation, differentiation and migration, and regulation of cell shape. Responds to activation by environmental stress by phosphorylating a number of transcription factors, primarily components of AP-1 such as Jra and also the transcriptional repressor aop, and thus regulates transcriptional activity. Component of the immune response activated by bacterial infection, and is involved in wound healing and in dorsal closure, a morphogenetic movement during embryogenesis. Functions in the systematic response to wounding acting downstream of the Hayan-phenoloxidase PPO1 cascade. During epidermal wound healing involved in cellular polarization by inducing the translocation of sktl and mys/integrin beta to the trailing edge. Exhibits cytoprotective activity in neuronal cells in response to wounding to the integument. Controls the expression of a phosphatase, puckered, at the edges of wounded epidermal tissue and in the dorsal epithelium during dorsal closure. Regulates the activity of SREBP in neurons and thereby the accumulation of lipids in glia. Plays a role in positively regulating the expression of DIP2 independently of AP-1, thereby ensuring proper axon guidance in mushroom bodies. In enterocytes and differentiating progenitors of the gut that are experiencing inorganic phosphate (Pi) deficiency, activated by Cka to induce nearby progenitor cells to proliferate and form new absorptive cells, probably helping the organism to cope with the nutrient deficiency by maximizing absorption of dietary Pi. The polypeptide is Stress-activated protein kinase JNK (Drosophila melanogaster (Fruit fly)).